The sequence spans 479 residues: Glutamyl-tRNA(Gln) amidotransferase subunit A (479 aa).

Residues Lys71 and Ser146 each act as charge relay system in the active site. Ser170 functions as the Acyl-ester intermediate in the catalytic mechanism.

Belongs to the amidase family. GatA subfamily. Heterotrimer of A, B and C subunits.

The catalysed reaction is L-glutamyl-tRNA(Gln) + L-glutamine + ATP + H2O = L-glutaminyl-tRNA(Gln) + L-glutamate + ADP + phosphate + H(+). Allows the formation of correctly charged Gln-tRNA(Gln) through the transamidation of misacylated Glu-tRNA(Gln) in organisms which lack glutaminyl-tRNA synthetase. The reaction takes place in the presence of glutamine and ATP through an activated gamma-phospho-Glu-tRNA(Gln). This Lactobacillus gasseri (strain ATCC 33323 / DSM 20243 / BCRC 14619 / CIP 102991 / JCM 1131 / KCTC 3163 / NCIMB 11718 / NCTC 13722 / AM63) protein is Glutamyl-tRNA(Gln) amidotransferase subunit A.